A 463-amino-acid polypeptide reads, in one-letter code: Nitrogenase vanadium-iron protein beta chain (463 aa).

[8Fe-7S] cluster contacts are provided by C20, C45, C104, and S142.

Belongs to the NifD/NifK/NifE/NifN family. As to quaternary structure, hexamer of two alpha, two beta, and two delta chains. [8Fe-7S] cluster serves as cofactor.

The enzyme catalyses N2 + 8 reduced [2Fe-2S]-[ferredoxin] + 16 ATP + 16 H2O = H2 + 8 oxidized [2Fe-2S]-[ferredoxin] + 2 NH4(+) + 16 ADP + 16 phosphate + 6 H(+). In terms of biological role, this vanadium-iron protein is part of the nitrogenase complex that catalyzes the key enzymatic reactions in nitrogen fixation. This Trichormus variabilis (strain ATCC 29413 / PCC 7937) (Anabaena variabilis) protein is Nitrogenase vanadium-iron protein beta chain (vnfK).